The following is a 293-amino-acid chain: 3-methyl-2-oxobutanoate hydroxymethyltransferase (293 aa).

The interval 1-26 is disordered; it reads MTQAPVTAGTPYGTIPPASPLPQRRP. Residues Asp-68 and Asp-111 each contribute to the Mg(2+) site. Residues 68–69, Asp-111, and Lys-140 contribute to the 3-methyl-2-oxobutanoate site; that span reads DS. Glu-142 contributes to the Mg(2+) binding site. The active-site Proton acceptor is the Glu-209.

It belongs to the PanB family. Homodecamer; pentamer of dimers. Mg(2+) is required as a cofactor.

The protein localises to the cytoplasm. The enzyme catalyses 3-methyl-2-oxobutanoate + (6R)-5,10-methylene-5,6,7,8-tetrahydrofolate + H2O = 2-dehydropantoate + (6S)-5,6,7,8-tetrahydrofolate. It functions in the pathway cofactor biosynthesis; (R)-pantothenate biosynthesis; (R)-pantoate from 3-methyl-2-oxobutanoate: step 1/2. In terms of biological role, catalyzes the reversible reaction in which hydroxymethyl group from 5,10-methylenetetrahydrofolate is transferred onto alpha-ketoisovalerate to form ketopantoate. This chain is 3-methyl-2-oxobutanoate hydroxymethyltransferase, found in Delftia acidovorans (strain DSM 14801 / SPH-1).